The chain runs to 120 residues: uncharacterized protein (120 aa).

The chain crosses the membrane as a helical span at residues 19–41 (YPELFITWCVMTYTFGVAGYMLG). Positions 57 to 78 (SKNAHPWEDTKSSSGKSDESLD) are disordered. Over residues 61–75 (HPWEDTKSSSGKSDE) the composition is skewed to basic and acidic residues.

It localises to the membrane. This is an uncharacterized protein from Schizosaccharomyces pombe (strain 972 / ATCC 24843) (Fission yeast).